The following is a 438-amino-acid chain: Indole diterpene prenyltransferase paxD (438 aa).

80–81 (FM) contacts L-tryptophan. 7 residues coordinate substrate: R102, K190, R264, K266, Y268, Y349, and Y418.

This sequence belongs to the tryptophan dimethylallyltransferase family.

Its pathway is secondary metabolite biosynthesis. In terms of biological role, indole diterpene prenyltransferase; part of the gene cluster that mediates the biosynthesis of paxilline, a mycotoxin that acts as an inhibitor of mammalian maxi-K channels. PaxG, the geranylgeranyl diphosphate (GGPP) synthase is proposed to catalyze the first step in paxilline biosynthesis. Condensation of indole-3-glycerol phosphate with GGPP by paxC then forms 3-geranylgeranylindole (3-GGI), followed by epoxidation and cyclization of this intermediate (by paxM and paxB) to form paspaline. Paspaline is subsequently converted to 13-desoxypaxilline by paxP, the latter being then converted to paxilline by paxQ. Finally paxilline can be mono- and di-prenylated by paxD. The polypeptide is Indole diterpene prenyltransferase paxD (Penicillium paxilli).